A 483-amino-acid polypeptide reads, in one-letter code: Centrosomal protein cep57l1 (483 aa).

Residues 94–228 (EHKKVLESEK…AQVQTSLEVN (135 aa)) are a coiled coil. Disordered regions lie at residues 237–261 (AQNS…SKEP), 303–325 (PQVS…GGSR), and 416–460 (KEQP…SKAS). The segment covering 243–252 (RKVKKKKQSK) has biased composition (basic residues). Residues 375-418 (EDLERELDYVVKQMEIKSDQIMKLKRHQLNVNKLKKTAKLLKEQ) adopt a coiled-coil conformation. The segment covering 420–435 (RPTSVTKLAADKQNTG) has biased composition (polar residues).

Belongs to the translokin family. In terms of assembly, interacts with clip1, mis12, ndc80 and zwint. Interacts with gamma-tubulin.

The protein resides in the cytoplasm. The protein localises to the cytoskeleton. It is found in the microtubule organizing center. Its subcellular location is the centrosome. It localises to the chromosome. The protein resides in the centromere. The protein localises to the kinetochore. It is found in the spindle. Required for spindle microtubule attachment to both kinetochores and centrosomes. Also functions to tether minus-ends of spindle microtubules to centrosomes. May act by forming ring-like structures around microtubules, or by serving as a cross-linker or scaffold at the attachment site. In Xenopus tropicalis (Western clawed frog), this protein is Centrosomal protein cep57l1 (cep57l1).